Consider the following 126-residue polypeptide: Ribosome-binding factor A (126 aa).

This sequence belongs to the RbfA family. As to quaternary structure, monomer. Binds 30S ribosomal subunits, but not 50S ribosomal subunits or 70S ribosomes.

The protein resides in the cytoplasm. Functionally, one of several proteins that assist in the late maturation steps of the functional core of the 30S ribosomal subunit. Associates with free 30S ribosomal subunits (but not with 30S subunits that are part of 70S ribosomes or polysomes). Required for efficient processing of 16S rRNA. May interact with the 5'-terminal helix region of 16S rRNA. The sequence is that of Ribosome-binding factor A from Halorhodospira halophila (strain DSM 244 / SL1) (Ectothiorhodospira halophila (strain DSM 244 / SL1)).